Consider the following 401-residue polypeptide: Argininosuccinate synthase (401 aa).

Ala8–Thr16 is a binding site for ATP. Tyr87 contacts L-citrulline. Gly117 serves as a coordination point for ATP. L-aspartate contacts are provided by Thr119, Asn123, and Asp124. Asn123 lines the L-citrulline pocket. Residues Arg127, Ser175, Glu259, and Tyr271 each contribute to the L-citrulline site.

The protein belongs to the argininosuccinate synthase family. Type 1 subfamily. As to quaternary structure, homotetramer.

The protein localises to the cytoplasm. The enzyme catalyses L-citrulline + L-aspartate + ATP = 2-(N(omega)-L-arginino)succinate + AMP + diphosphate + H(+). Its pathway is amino-acid biosynthesis; L-arginine biosynthesis; L-arginine from L-ornithine and carbamoyl phosphate: step 2/3. The sequence is that of Argininosuccinate synthase from Corynebacterium glutamicum (strain ATCC 13032 / DSM 20300 / JCM 1318 / BCRC 11384 / CCUG 27702 / LMG 3730 / NBRC 12168 / NCIMB 10025 / NRRL B-2784 / 534).